Here is a 159-residue protein sequence, read N- to C-terminus: NADH dehydrogenase [ubiquinone] 1 beta subcomplex subunit 10 (159 aa).

It belongs to the complex I NDUFB10 subunit family. As to quaternary structure, complex I is composed of 45 different subunits.

Its subcellular location is the mitochondrion inner membrane. Accessory subunit of the mitochondrial membrane respiratory chain NADH dehydrogenase (Complex I), that is believed not to be involved in catalysis. Complex I functions in the transfer of electrons from NADH to the respiratory chain. The immediate electron acceptor for the enzyme is believed to be ubiquinone. The chain is NADH dehydrogenase [ubiquinone] 1 beta subcomplex subunit 10 from Bombyx mori (Silk moth).